Consider the following 375-residue polypeptide: Tyrosine--tRNA ligase (375 aa).

The L-tyrosine site is built by Y37, Y168, Q172, D175, and Q190. The short motif at 251–255 (KMSKS) is the 'KMSKS' region element. K254 serves as a coordination point for ATP.

This sequence belongs to the class-I aminoacyl-tRNA synthetase family. TyrS type 4 subfamily. Homodimer.

The protein resides in the cytoplasm. The enzyme catalyses tRNA(Tyr) + L-tyrosine + ATP = L-tyrosyl-tRNA(Tyr) + AMP + diphosphate + H(+). Its function is as follows. Catalyzes the attachment of tyrosine to tRNA(Tyr) in a two-step reaction: tyrosine is first activated by ATP to form Tyr-AMP and then transferred to the acceptor end of tRNA(Tyr). The sequence is that of Tyrosine--tRNA ligase from Thermococcus sibiricus (strain DSM 12597 / MM 739).